A 339-amino-acid chain; its full sequence is Thymidine kinase (339 aa).

11–18 (GAFGIGKT) serves as a coordination point for ATP. The active-site Proton acceptor is Glu39. Tyr59 and Gln83 together coordinate substrate. Position 176 (Arg176) interacts with ATP. Substrate is bound at residue Arg182.

Belongs to the herpesviridae thymidine kinase family. As to quaternary structure, homodimer.

The enzyme catalyses thymidine + ATP = dTMP + ADP + H(+). Its function is as follows. Catalyzes the transfer of the gamma-phospho group of ATP to thymidine to generate dTMP in the salvage pathway of pyrimidine synthesis. The dTMP serves as a substrate for DNA polymerase during viral DNA replication. Allows the virus to be reactivated and to grow in non-proliferative cells lacking a high concentration of phosphorylated nucleic acid precursors. The sequence is that of Thymidine kinase from Amazona oratrix (yellow-headed parrot).